Here is an 886-residue protein sequence, read N- to C-terminus: CRM-domain containing factor CFM3, chloroplastic/mitochondrial (886 aa).

A chloroplast and mitochondrion-targeting transit peptide spans 1 to 70 (MAAAAMAISP…LDLRPEPSPS (70 aa)). 2 disordered regions span residues 56–84 (RPASALDLRPEPSPSSDSDDDAAFGTSRS) and 269–291 (TKGTSKNTQTLGMKSSIKEPPGH). CRM domains follow at residues 174–270 (LTLP…EPTK), 378–475 (PSLS…ELAE), and 590–690 (ETIT…SKLR). Over residues 270–281 (KGTSKNTQTLGM) the composition is skewed to polar residues. The disordered stretch occupies residues 771–886 (SFDNSVAVQN…QSTELTNTCS (116 aa)). Residues 793-827 (NSDDEGDYSDEDDDEDDDNDEEDGFDYENDDEDDV) show a composition bias toward acidic residues. Polar residues-rich tracts occupy residues 841-852 (DFGSSDSENYVS) and 869-886 (DSRNSYSEQSTELTNTCS).

In terms of assembly, interacts with RNA. Part of large ribonucleo-protein particles that contain CAF1 and/or CAF2, and RNC1.

The protein resides in the plastid. Its subcellular location is the chloroplast. It localises to the mitochondrion. In terms of biological role, binds specific group II introns in chloroplasts and facilitates their splicing. Acts on subgroup IIB introns. The substrates of the subgroup IIB also require the CRM domain proteins CAF1 or CAF2, with a simultaneous binding of CFM3 and CAF1 or CAF2. May influence the biogenesis of the mitochondrial small ribosomal subunit. This is CRM-domain containing factor CFM3, chloroplastic/mitochondrial from Oryza sativa subsp. japonica (Rice).